The following is a 257-amino-acid chain: Putative phosphatase YkrA (257 aa).

Asp-9 (nucleophile) is an active-site residue. A Mg(2+)-binding site is contributed by Asp-9. Ile-10 lines the phosphate pocket. Mg(2+) is bound at residue Asp-11. Phosphate-binding positions include 43–44 (SG) and Lys-183. Residue Asp-206 participates in Mg(2+) binding. Asn-209 contacts phosphate.

This sequence belongs to the HAD-like hydrolase superfamily. Cof family. The cofactor is Mg(2+).

The chain is Putative phosphatase YkrA (ykrA) from Bacillus subtilis (strain 168).